Here is a 280-residue protein sequence, read N- to C-terminus: 3-methyl-2-oxobutanoate hydroxymethyltransferase (280 aa).

Mg(2+)-binding residues include Asp-49 and Asp-88. 3-methyl-2-oxobutanoate contacts are provided by residues 49-50 (DS), Asp-88, and Lys-118. Glu-120 serves as a coordination point for Mg(2+). The Proton acceptor role is filled by Glu-186.

It belongs to the PanB family. Homodecamer; pentamer of dimers. Requires Mg(2+) as cofactor.

Its subcellular location is the cytoplasm. It catalyses the reaction 3-methyl-2-oxobutanoate + (6R)-5,10-methylene-5,6,7,8-tetrahydrofolate + H2O = 2-dehydropantoate + (6S)-5,6,7,8-tetrahydrofolate. The protein operates within cofactor biosynthesis; (R)-pantothenate biosynthesis; (R)-pantoate from 3-methyl-2-oxobutanoate: step 1/2. In terms of biological role, catalyzes the reversible reaction in which hydroxymethyl group from 5,10-methylenetetrahydrofolate is transferred onto alpha-ketoisovalerate to form ketopantoate. The polypeptide is 3-methyl-2-oxobutanoate hydroxymethyltransferase (Ruegeria sp. (strain TM1040) (Silicibacter sp.)).